We begin with the raw amino-acid sequence, 371 residues long: Peptide chain release factor 2 (371 aa).

Position 252 is an N5-methylglutamine (Gln252).

The protein belongs to the prokaryotic/mitochondrial release factor family. Post-translationally, methylated by PrmC. Methylation increases the termination efficiency of RF2.

It localises to the cytoplasm. Peptide chain release factor 2 directs the termination of translation in response to the peptide chain termination codons UGA and UAA. The sequence is that of Peptide chain release factor 2 from Staphylococcus haemolyticus (strain JCSC1435).